We begin with the raw amino-acid sequence, 261 residues long: MKKFLLKPKKSLGQNFILSSEITKRIVVLAGNLEDFNVIEIGPGYGALTKEILAHNPKSLLAIEKDSNLVKCHDQLLNEHQGKFRIVEADALYVVEEELIERPVKVIANLPYNISLALFLKWLNKIKLFTTFTLMFQKEVADRIIARPNSKDYGSLSVLSQLLCDIRREFDIEPKEFFPRPKVYSSVITVKPLPTQRFAVNLEALTKLTRAVFAQRRKMLRNSLQNVTNRTETALENAKLSGNERPKNLTVEQFCLLANNM.

S-adenosyl-L-methionine is bound by residues N15, I17, G42, E64, D90, and N109.

The protein belongs to the class I-like SAM-binding methyltransferase superfamily. rRNA adenine N(6)-methyltransferase family. RsmA subfamily.

The protein localises to the cytoplasm. It catalyses the reaction adenosine(1518)/adenosine(1519) in 16S rRNA + 4 S-adenosyl-L-methionine = N(6)-dimethyladenosine(1518)/N(6)-dimethyladenosine(1519) in 16S rRNA + 4 S-adenosyl-L-homocysteine + 4 H(+). Specifically dimethylates two adjacent adenosines (A1518 and A1519) in the loop of a conserved hairpin near the 3'-end of 16S rRNA in the 30S particle. May play a critical role in biogenesis of 30S subunits. The protein is Ribosomal RNA small subunit methyltransferase A of Wolbachia sp. subsp. Brugia malayi (strain TRS).